A 184-amino-acid chain; its full sequence is Rhox homeobox family member 1 (184 aa).

Positions 26–104 (QLGAASSAEG…GPQPENMQPR (79 aa)) are disordered. Positions 88-99 (PAQAAMEGPQPE) are enriched in low complexity. A DNA-binding region (homeobox) is located at residues 103–162 (PRTRRTKFTLLQVEELESVFRHTQYPDVPTRRELAENLGVTEDKVRVWFKNKRARCRRHQ). Positions 155–164 (RARCRRHQRE) match the Nuclear localization signal motif.

It belongs to the paired-like homeobox family. PEPP subfamily. Does not interact with itself. As to expression, ovary, testis and epididymis. Also detected in the prostate and the mammary gland. Expressed in many tumor cell lines derived from acute lymphocytic leukemia, prostate, endometrial adenocarcinoma, melanoma, bladder carcinoma, colon carcinoma, erythroleukemia and breast carcinoma. Not expressed in placenta. In testis, mainly expressed in germ cells, but also detected in somatic cells such as Sertoli cells, Leydig cells and peritubular cells.

It localises to the nucleus. Its function is as follows. Transcription factor maybe involved in reproductive processes. Modulates expression of target genes encoding proteins involved in processes relevant to spermatogenesis. The sequence is that of Rhox homeobox family member 1 from Homo sapiens (Human).